Consider the following 395-residue polypeptide: Type II restriction enzyme BsuFI (395 aa).

Homodimer. Mg(2+) is required as a cofactor.

It catalyses the reaction Endonucleolytic cleavage of DNA to give specific double-stranded fragments with terminal 5'-phosphates.. Functionally, a P subtype restriction enzyme that recognizes the double-stranded sequence 5'-CCGG-3' and cleaves after C-1. The protein is Type II restriction enzyme BsuFI (hsdFR) of Bacillus subtilis.